A 673-amino-acid chain; its full sequence is eEF1A lysine and N-terminal methyltransferase homolog (673 aa).

It belongs to the methyltransferase superfamily.

The catalysed reaction is L-lysyl-[protein] + S-adenosyl-L-methionine = N(6)-methyl-L-lysyl-[protein] + S-adenosyl-L-homocysteine + H(+). The enzyme catalyses N(6)-methyl-L-lysyl-[protein] + S-adenosyl-L-methionine = N(6),N(6)-dimethyl-L-lysyl-[protein] + S-adenosyl-L-homocysteine + H(+). It catalyses the reaction N-terminal glycyl-L-lysyl-L-glutamyl-[protein] + 3 S-adenosyl-L-methionine = N-terminal N,N,N-trimethyl-glycyl-L-lysyl-L-glutamyl-[protein] + 3 S-adenosyl-L-homocysteine + 3 H(+). In terms of biological role, dual methyltransferase. It catalyzes N-terminal methylation of target proteins via its C-terminus. It catalyzes dimethylation on lysine residues of target proteins via its N-terminus. This is eEF1A lysine and N-terminal methyltransferase homolog from Drosophila pseudoobscura pseudoobscura (Fruit fly).